Reading from the N-terminus, the 68-residue chain is Large ribosomal subunit protein uL29 (68 aa).

The protein belongs to the universal ribosomal protein uL29 family.

The polypeptide is Large ribosomal subunit protein uL29 (Nitrobacter hamburgensis (strain DSM 10229 / NCIMB 13809 / X14)).